Here is a 116-residue protein sequence, read N- to C-terminus: U11-theraphotoxin-Hhn1b (116 aa).

The signal sequence occupies residues 1 to 21 (MNTVRVTFLLVFVLAVSLGQA). Positions 22-74 (DKDENRMEMQEKTEQGKSYLDFAENLLLQKLEELEAKLLEEDSEESRNSRQKR) are excised as a propeptide. A compositionally biased stretch (basic and acidic residues) spans 60–69 (LEEDSEESRN). The tract at residues 60–83 (LEEDSEESRNSRQKRCIGEGVPCD) is disordered. 3 disulfides stabilise this stretch: C75–C90, C82–C95, and C89–C110.

Belongs to the neurotoxin 14 (magi-1) family. 01 (HNTX-16) subfamily. Expressed by the venom gland.

It is found in the secreted. Its function is as follows. Probable ion channel inhibitor. The chain is U11-theraphotoxin-Hhn1b from Cyriopagopus hainanus (Chinese bird spider).